The following is a 249-amino-acid chain: DNA polymerase sliding clamp (249 aa).

The protein belongs to the PCNA family. As to quaternary structure, homotrimer. The subunits circularize to form a toroid; DNA passes through its center. Replication factor C (RFC) is required to load the toroid on the DNA.

Its function is as follows. Sliding clamp subunit that acts as a moving platform for DNA processing. Responsible for tethering the catalytic subunit of DNA polymerase and other proteins to DNA during high-speed replication. The chain is DNA polymerase sliding clamp from Thermococcus onnurineus (strain NA1).